We begin with the raw amino-acid sequence, 1227 residues long: Tyrosine-protein kinase receptor ver-3 (1227 aa).

Positions Met-1 to Ser-17 are cleaved as a signal peptide. The Extracellular segment spans residues Tyr-18 to Ser-764. The 91-residue stretch at Pro-20–Cys-110 folds into the Ig-like C2-type 1 domain. Cysteines 52 and 110 form a disulfide. 7 N-linked (GlcNAc...) asparagine glycosylation sites follow: Asn-119, Asn-211, Asn-245, Asn-255, Asn-381, Asn-425, and Asn-528. Residues Val-200–Thr-325 enclose the Ig-like C2-type 2 domain. A disulfide bridge links Cys-204 with Cys-313. 2 Ig-like C2-type domains span residues Pro-565–Asp-666 and Pro-673–Asn-758. 2 cysteine pairs are disulfide-bonded: Cys-592–Cys-650 and Cys-696–Cys-740. Residue Asn-697 is glycosylated (N-linked (GlcNAc...) asparagine). Residues Leu-765–Leu-785 form a helical membrane-spanning segment. The Cytoplasmic portion of the chain corresponds to Thr-786–Ala-1227. The region spanning Leu-847–Leu-1175 is the Protein kinase domain. ATP contacts are provided by residues Ile-853–Val-861 and Lys-886. Residue Asp-1030 is the Proton acceptor of the active site. The segment at Asp-1194–Ala-1227 is disordered. Residues Lys-1214–Ala-1227 are compositionally biased toward basic and acidic residues.

The protein belongs to the protein kinase superfamily. Tyr protein kinase family. In terms of tissue distribution, expressed in the ALA neuron.

The protein resides in the cell membrane. The catalysed reaction is L-tyrosyl-[protein] + ATP = O-phospho-L-tyrosyl-[protein] + ADP + H(+). In terms of biological role, receptor tyrosine kinase which may be involved, downstream of pvf-1, in the positioning of ray 1, the most anterior ray sensillum in the male tail. This Caenorhabditis elegans protein is Tyrosine-protein kinase receptor ver-3.